The following is a 462-amino-acid chain: Cysteine--tRNA ligase (462 aa).

Cysteine 30 contacts Zn(2+). Residues methionine 32–histidine 42 carry the 'HIGH' region motif. Zn(2+) is bound by residues cysteine 214, histidine 239, and glutamate 243. Residues lysine 271 to serine 275 carry the 'KMSKS' region motif. Lysine 274 is an ATP binding site.

This sequence belongs to the class-I aminoacyl-tRNA synthetase family. Monomer. The cofactor is Zn(2+).

Its subcellular location is the cytoplasm. It carries out the reaction tRNA(Cys) + L-cysteine + ATP = L-cysteinyl-tRNA(Cys) + AMP + diphosphate. The chain is Cysteine--tRNA ligase from Cupriavidus taiwanensis (strain DSM 17343 / BCRC 17206 / CCUG 44338 / CIP 107171 / LMG 19424 / R1) (Ralstonia taiwanensis (strain LMG 19424)).